The following is a 108-amino-acid chain: uncharacterized protein (108 aa).

The N-linked (GlcNAc...) asparagine glycan is linked to Asn-33.

In terms of processing, N-glycosylated.

This is an uncharacterized protein from Saccharomyces cerevisiae (strain ATCC 204508 / S288c) (Baker's yeast).